A 138-amino-acid chain; its full sequence is MSSRPPSSSGPAGIPKGAPSQRQLRVAEEIRHVLAGVFARQEFRDPELATTTFTINEVRISPDLKHATVFISRLGSSEIEPLLPNLKRVATYLRGEVAKVMRLRYAPELHFQPDSALEYAMHVDSLLRRPEVKRDLDE.

The segment covering 1–20 (MSSRPPSSSGPAGIPKGAPS) has biased composition (low complexity). A disordered region spans residues 1–21 (MSSRPPSSSGPAGIPKGAPSQ).

Belongs to the RbfA family. In terms of assembly, monomer. Binds 30S ribosomal subunits, but not 50S ribosomal subunits or 70S ribosomes.

It is found in the cytoplasm. In terms of biological role, one of several proteins that assist in the late maturation steps of the functional core of the 30S ribosomal subunit. Associates with free 30S ribosomal subunits (but not with 30S subunits that are part of 70S ribosomes or polysomes). Required for efficient processing of 16S rRNA. May interact with the 5'-terminal helix region of 16S rRNA. The protein is Ribosome-binding factor A of Granulibacter bethesdensis (strain ATCC BAA-1260 / CGDNIH1).